We begin with the raw amino-acid sequence, 261 residues long: Cytochrome c oxidase subunit 3 (261 aa).

The next 6 helical transmembrane spans lie at 31-51 (LVLWFHTGNIILLFTGLLLLI), 82-102 (PMILFITSEVCFFFAFFWAFF), 126-146 (PFLVPLLNTAVLLSSGVTITW), 159-179 (AIQALFLTVVLGIYFTILQAW), 197-217 (FFVATGFHGLHVIIGTTFLLV), and 239-259 (AWYWHFVDVVWLFLYVCIYWW).

Belongs to the cytochrome c oxidase subunit 3 family. In terms of assembly, component of the cytochrome c oxidase (complex IV, CIV), a multisubunit enzyme composed of a catalytic core of 3 subunits and several supernumerary subunits. The complex exists as a monomer or a dimer and forms supercomplexes (SCs) in the inner mitochondrial membrane with ubiquinol-cytochrome c oxidoreductase (cytochrome b-c1 complex, complex III, CIII).

Its subcellular location is the mitochondrion inner membrane. The enzyme catalyses 4 Fe(II)-[cytochrome c] + O2 + 8 H(+)(in) = 4 Fe(III)-[cytochrome c] + 2 H2O + 4 H(+)(out). In terms of biological role, component of the cytochrome c oxidase, the last enzyme in the mitochondrial electron transport chain which drives oxidative phosphorylation. The respiratory chain contains 3 multisubunit complexes succinate dehydrogenase (complex II, CII), ubiquinol-cytochrome c oxidoreductase (cytochrome b-c1 complex, complex III, CIII) and cytochrome c oxidase (complex IV, CIV), that cooperate to transfer electrons derived from NADH and succinate to molecular oxygen, creating an electrochemical gradient over the inner membrane that drives transmembrane transport and the ATP synthase. Cytochrome c oxidase is the component of the respiratory chain that catalyzes the reduction of oxygen to water. Electrons originating from reduced cytochrome c in the intermembrane space (IMS) are transferred via the dinuclear copper A center (CU(A)) of subunit 2 and heme A of subunit 1 to the active site in subunit 1, a binuclear center (BNC) formed by heme A3 and copper B (CU(B)). The BNC reduces molecular oxygen to 2 water molecules using 4 electrons from cytochrome c in the IMS and 4 protons from the mitochondrial matrix. The chain is Cytochrome c oxidase subunit 3 (COIII) from Paracentrotus lividus (Common sea urchin).